The following is a 942-amino-acid chain: UvrABC system protein A (942 aa).

31 to 38 (GLSGSGKS) contributes to the ATP binding site. A C4-type zinc finger spans residues 253-280 (CSECGYSLPELEPRLFSFNNPAGACPTC). ABC transporter domains are found at residues 310 to 586 (WDRR…EASI) and 606 to 936 (YDAN…RFLT). An ATP-binding site is contributed by 639–646 (GVSGSGKS). The C4-type zinc finger occupies 739 to 765 (CEACQGDGVIKVEMHFLPDVYVPCDHC).

The protein belongs to the ABC transporter superfamily. UvrA family. In terms of assembly, forms a heterotetramer with UvrB during the search for lesions.

The protein resides in the cytoplasm. Functionally, the UvrABC repair system catalyzes the recognition and processing of DNA lesions. UvrA is an ATPase and a DNA-binding protein. A damage recognition complex composed of 2 UvrA and 2 UvrB subunits scans DNA for abnormalities. When the presence of a lesion has been verified by UvrB, the UvrA molecules dissociate. The polypeptide is UvrABC system protein A (Haemophilus ducreyi (strain 35000HP / ATCC 700724)).